Here is a 511-residue protein sequence, read N- to C-terminus: Fusicocca-1,10(14)-diene-8beta,16-diol C-9 hydroxylase (511 aa).

Residues 7–29 (TVAALAAVFVAGTLLSRLASWIR) traverse the membrane as a helical segment. Residues Asn-64, Asn-163, and Asn-343 are each glycosylated (N-linked (GlcNAc...) asparagine). Cys-450 contacts heme.

This sequence belongs to the cytochrome P450 family. Heme serves as cofactor.

The protein localises to the membrane. The protein operates within mycotoxin biosynthesis. In terms of biological role, cytochrome P450 monooxygenase; part of the 2 gene clusters that mediate the biosynthesis of fusicoccins, diterpene glucosides that display phytohormone-like activity and function as potent activators of plasma membrane H(+)-ATPases in plants by modifying 14-3-3 proteins and cause the plant disease constriction canker. The first step in the pathway is performed by the fusicoccadiene synthase PaFS that possesses both prenyl transferase and terpene cyclase activity, converting isopentenyl diphosphate and dimethylallyl diphosphate into geranylgeranyl diphosphate (GGDP) and successively converting GGDP into fusicocca-2,10(14)-diene, a precursor for fusicoccin H. The second step is the oxidation at the C-8 position by the cytochrome P450 monooxygenase PaP450-2 to yield fusicocca-2,10(14)-diene-8-beta-ol. The cytochrome P450 monooxygenase PaP450-1 then catalyzes the hydroxylation at the C-16 position to produce fusicocca-2,10(14)-diene-8-beta,16-diol. The dioxygenase fc-dox then catalyzes the 16-oxydation of fusicocca-2,10(14)-diene-8-beta,16-diol to yield an aldehyde (8-beta-hydroxyfusicocca-1,10(14)-dien-16-al). The short-chain dehydrogenase/reductase fc-sdr catalyzes the reduction of the aldehyde to yield fusicocca-1,10(14)-diene-8-beta,16-diol. The next step is the hydroxylation at C-9 performed by the cytochrome P450 monooxygenase PaP450-3 that leads to fusicoccin H aglycon which is glycosylated to fusicoccin H by the O-glycosyltransferase PaGT. Hydroxylation at C-12 by the cytochrome P450 monooxygenase PaP450-4 leads then to the production of fusicoccin Q and is followed by methylation by the O-methyltransferase PaMT to yield fusicoccin P. Fusicoccin P is further converted to fusicoccin J via prenylation by the O-glucose prenyltransferase PaPT. Cytochrome P450 monooxygenase PaP450-5 then performs hydroxylation at C-19 to yield dideacetyl-fusicoccin A which is acetylated to 3'-O-deacetyl-fusicoccin A by the O-acetyltransferase PaAT-2. Finally, a another acetylation by the O-acetyltransferase PaAT-1 yields fusicoccin A. The polypeptide is Fusicocca-1,10(14)-diene-8beta,16-diol C-9 hydroxylase (Phomopsis amygdali (Fusicoccum amygdali)).